The following is a 488-amino-acid chain: MSQSVEERTRIKNQRYESGVIPYAKMGYWDPNYVVKETDVLALFRVTPQPGVDPVEASAAVAGESSTATWTVVWTDLLTACDLYRAKAYKVDAVPNTTDQYFAFIAYDIDLFEEGSIANLTASIIGNVFGFKAVKALRLEDMRIPVAYLKTFQGPATGLIVERERMDKFGRPFLGATVKPKLGLSGKNYGRVVYEGLKGGLDFLKDDENINSQPFMRWKERFLYSMEAVNRAIAATGETKGHYMNVTAATMEEMYERAEFAKQLGSIIIMIDLVIGYTAIQTMAIWARKNDMILHLHRAGNSTYSRQKIHGMNFRVICKWMRMSGVDHIHAGTVVGKLEGDPLMIRGFYNTLLQTHLEVNLPQGIFFEQDWASLRKVTPVASGGIHCGQMHQLLDYLGNDVVLQFGGGTIGHPDGIQAGATANRVALEAMVLARNEGRDYVAEGPQILRDAAKTCGPLQTALDLWKDITFNYTSTDTADFVETPTANV.

2 residues coordinate substrate: N127 and T177. K179 (proton acceptor) is an active-site residue. Residue K181 participates in substrate binding. K205, D207, and E208 together coordinate Mg(2+). K205 carries the post-translational modification N6-carboxylysine. H297 serves as the catalytic Proton acceptor. Residues R298, H330, and S382 each coordinate substrate.

Belongs to the RuBisCO large chain family. Type I subfamily. As to quaternary structure, heterohexadecamer of 8 large chains and 8 small chains. Mg(2+) is required as a cofactor.

Its subcellular location is the plastid. It is found in the chloroplast. It carries out the reaction 2 (2R)-3-phosphoglycerate + 2 H(+) = D-ribulose 1,5-bisphosphate + CO2 + H2O. It catalyses the reaction D-ribulose 1,5-bisphosphate + O2 = 2-phosphoglycolate + (2R)-3-phosphoglycerate + 2 H(+). In terms of biological role, ruBisCO catalyzes two reactions: the carboxylation of D-ribulose 1,5-bisphosphate, the primary event in carbon dioxide fixation, as well as the oxidative fragmentation of the pentose substrate in the photorespiration process. Both reactions occur simultaneously and in competition at the same active site. This is Ribulose bisphosphate carboxylase large chain from Gracilaria tenuistipitata var. liui (Red alga).